The following is a 345-amino-acid chain: Uroporphyrinogen decarboxylase (345 aa).

Substrate contacts are provided by residues 27 to 31 (RQAGR), F46, D76, Y152, S207, and H321.

It belongs to the uroporphyrinogen decarboxylase family. As to quaternary structure, homodimer.

It is found in the cytoplasm. It carries out the reaction uroporphyrinogen III + 4 H(+) = coproporphyrinogen III + 4 CO2. It functions in the pathway porphyrin-containing compound metabolism; protoporphyrin-IX biosynthesis; coproporphyrinogen-III from 5-aminolevulinate: step 4/4. In terms of biological role, catalyzes the decarboxylation of four acetate groups of uroporphyrinogen-III to yield coproporphyrinogen-III. This is Uroporphyrinogen decarboxylase from Staphylococcus aureus (strain Mu3 / ATCC 700698).